The sequence spans 181 residues: MYGKLLICATASINVININHYIVELKQHFDEVNILFSPSSKNFINTDVLKLFCDNLYDEIKDPLLNHINIVENHEYILVLPASANTINKIANGICDNLLTTVCLTGYQKLFIFPNMNIRMWGNPFLQKNIDLLKNNDVKVYSPDMNKSFEISSGRYKNNITMPNIENVLNFVLNNEKRPLD.

The active site involves His-67.

Belongs to the HFCD (homooligomeric flavin containing Cys decarboxylase) superfamily. As to quaternary structure, homododecamer. Requires FMN as cofactor.

Catalyzes the removal of two reducing equivalents (oxidative decarboxylation) from the cysteine residue of the C-terminal meso-lanthionine of epidermin to form a --C==C-- double bond. This Staphylococcus epidermidis protein is Epidermin decarboxylase (epiD).